We begin with the raw amino-acid sequence, 246 residues long: Probable transcriptional regulatory protein BVU_3469 (246 aa).

Belongs to the TACO1 family.

The protein resides in the cytoplasm. In Phocaeicola vulgatus (strain ATCC 8482 / DSM 1447 / JCM 5826 / CCUG 4940 / NBRC 14291 / NCTC 11154) (Bacteroides vulgatus), this protein is Probable transcriptional regulatory protein BVU_3469.